The sequence spans 258 residues: Imidazole glycerol phosphate synthase subunit HisF (258 aa).

Residues aspartate 11 and aspartate 130 contribute to the active site.

Belongs to the HisA/HisF family. In terms of assembly, heterodimer of HisH and HisF.

It is found in the cytoplasm. The enzyme catalyses 5-[(5-phospho-1-deoxy-D-ribulos-1-ylimino)methylamino]-1-(5-phospho-beta-D-ribosyl)imidazole-4-carboxamide + L-glutamine = D-erythro-1-(imidazol-4-yl)glycerol 3-phosphate + 5-amino-1-(5-phospho-beta-D-ribosyl)imidazole-4-carboxamide + L-glutamate + H(+). Its pathway is amino-acid biosynthesis; L-histidine biosynthesis; L-histidine from 5-phospho-alpha-D-ribose 1-diphosphate: step 5/9. IGPS catalyzes the conversion of PRFAR and glutamine to IGP, AICAR and glutamate. The HisF subunit catalyzes the cyclization activity that produces IGP and AICAR from PRFAR using the ammonia provided by the HisH subunit. This is Imidazole glycerol phosphate synthase subunit HisF from Escherichia coli O7:K1 (strain IAI39 / ExPEC).